The following is a 231-amino-acid chain: Ribonuclease 3 (231 aa).

One can recognise an RNase III domain in the interval 5 to 134; sequence QKKLKNDYGL…FLGALFIDQG (130 aa). Position 47 (glutamate 47) interacts with Mg(2+). Aspartate 51 is an active-site residue. Mg(2+)-binding residues include asparagine 120 and glutamate 123. Residue glutamate 123 is part of the active site. The 70-residue stretch at 160-229 folds into the DRBM domain; it reads DYKTELQEVL…AENAIKGQNH (70 aa).

It belongs to the ribonuclease III family. As to quaternary structure, homodimer. Mg(2+) serves as cofactor.

It localises to the cytoplasm. The enzyme catalyses Endonucleolytic cleavage to 5'-phosphomonoester.. Its function is as follows. Digests double-stranded RNA. Involved in the processing of primary rRNA transcript to yield the immediate precursors to the large and small rRNAs (23S and 16S). Processes some mRNAs, and tRNAs when they are encoded in the rRNA operon. Processes pre-crRNA and tracrRNA of type II CRISPR loci if present in the organism. This Lactococcus lactis subsp. lactis (strain IL1403) (Streptococcus lactis) protein is Ribonuclease 3.